A 557-amino-acid polypeptide reads, in one-letter code: MNKLRSSAITQGVQRSPNRSMLRAVGFNDEDFNKPIIGVANGYSTITPCNIGLNKLALKAEESIRRSGGMPQKFGTITVSDGISMGTEGMKYSLVSREVIADSIETACNAQSMDAVLAIGGCDKNMPGAMIAIARMNIPSIFIYGGTIKPGKLHGEDLTVVSAFEAVGQLTSGKINEKRLIEVEKNCIPGAGSCGGMFTANTMSAVIEVLGLSLPHSSTMAAEDLEKELSAEKSAEILVSAIKKNIRPLDLMTKKAFENAISVIMAVGGSTNAVLHILAIANTAGIDINIDDFERIRQKVPVICDLKPSGKFVTVDLHNAGGIPQVMKILLNAGLIHGECKNIEGKTITEYLQNIPDKPPSNQNVIRGIDYPLYKKGHLAILKGNLAKEGSVAKISGVKNPVLTGPAKIFESEEDCLKAILNNEIIAGDVVVVRNEGPVGGPGMREMLSPTSAIVGQGLGEKVALITDGRFSGGSYGLVVGHIAPEAAVGGNIALIKEGDLITVDAVKQLIEVDLSDEELEKRKNNWVKPKPKYKRGILSKYSKIVSTSSLGAVTDL.

Position 49 (Cys49) interacts with [2Fe-2S] cluster. A Mg(2+)-binding site is contributed by Asp81. Cys122 provides a ligand contact to [2Fe-2S] cluster. Mg(2+)-binding residues include Asp123 and Lys124. The residue at position 124 (Lys124) is an N6-carboxylysine. Cys194 contributes to the [2Fe-2S] cluster binding site. A Mg(2+)-binding site is contributed by Glu446. Ser472 functions as the Proton acceptor in the catalytic mechanism.

It belongs to the IlvD/Edd family. In terms of assembly, homodimer. It depends on [2Fe-2S] cluster as a cofactor. Mg(2+) serves as cofactor.

It catalyses the reaction (2R)-2,3-dihydroxy-3-methylbutanoate = 3-methyl-2-oxobutanoate + H2O. The catalysed reaction is (2R,3R)-2,3-dihydroxy-3-methylpentanoate = (S)-3-methyl-2-oxopentanoate + H2O. Its pathway is amino-acid biosynthesis; L-isoleucine biosynthesis; L-isoleucine from 2-oxobutanoate: step 3/4. The protein operates within amino-acid biosynthesis; L-valine biosynthesis; L-valine from pyruvate: step 3/4. In terms of biological role, functions in the biosynthesis of branched-chain amino acids. Catalyzes the dehydration of (2R,3R)-2,3-dihydroxy-3-methylpentanoate (2,3-dihydroxy-3-methylvalerate) into 2-oxo-3-methylpentanoate (2-oxo-3-methylvalerate) and of (2R)-2,3-dihydroxy-3-methylbutanoate (2,3-dihydroxyisovalerate) into 2-oxo-3-methylbutanoate (2-oxoisovalerate), the penultimate precursor to L-isoleucine and L-valine, respectively. In Prochlorococcus marinus (strain MIT 9215), this protein is Dihydroxy-acid dehydratase.